Reading from the N-terminus, the 379-residue chain is Glucose-insensitive transcription protein 7 (379 aa).

Residues 181–272 enclose the CS domain; sequence SNRIRYDWSQ…VSEIKWEALV (92 aa). The SGS domain occupies 292-379; the sequence is ASGNTKNKAK…PPQGMEPKKF (88 aa). Residues 345–379 are disordered; sequence SYTESNGTALSTNWKDVKSKTFETKPPQGMEPKKF. Polar residues predominate over residues 346–358; that stretch reads YTESNGTALSTNW.

Functionally, involved in cyclic AMP (cAMP) pathway, possibly by participating in the assembly or the conformational activation of specific multiprotein complexes. The protein is Glucose-insensitive transcription protein 7 (git7) of Schizosaccharomyces pombe (strain 972 / ATCC 24843) (Fission yeast).